Consider the following 419-residue polypeptide: G protein-activated inward rectifier potassium channel 4 (419 aa).

At 1 to 86 the chain is on the cytoplasmic side; sequence MAGDSRNAMN…LFTTLVDLKW (86 aa). S5 carries the post-translational modification Phosphoserine. A helical membrane pass occupies residues 87 to 111; that stretch reads RFNLLVFTMVYTITWLFFGFIWWLI. Residues 112–135 lie on the Extracellular side of the membrane; the sequence is AYVRGDLDHVGDQEWIPCVENLSG. The segment at residues 136–147 is an intramembrane region (helical; Pore-forming); the sequence is FVSAFLFSIETE. The pore-forming intramembrane region spans 148-154; sequence TTIGYGF. The Selectivity filter signature appears at 149 to 154; that stretch reads TIGYGF. At 155–163 the chain is on the extracellular side; sequence RVITEKCPE. Residues 164 to 185 traverse the membrane as a helical segment; it reads GIILLLVQAILGSIVNAFMVGC. Topologically, residues 186–419 are cytoplasmic; that stretch reads MFVKISQPKK…SVSQATRGSM (234 aa). Residues 388 to 419 form a disordered region; that stretch reads GCAEAGNEAEAEKDEEGEPNGLSVSQATRGSM. A compositionally biased stretch (acidic residues) spans 394 to 405; it reads NEAEAEKDEEGE. Residues 409 to 419 are compositionally biased toward polar residues; the sequence is LSVSQATRGSM.

This sequence belongs to the inward rectifier-type potassium channel (TC 1.A.2.1) family. KCNJ5 subfamily. As to quaternary structure, associates with KCNJ3/GIRK1 to form a G-protein-activated heteromultimer pore-forming unit. Associates with KCNJ6/GRIK2 to form a G-protein-activated heteromultimer pore-forming unit. Expressed in the heart.

It is found in the membrane. It catalyses the reaction K(+)(in) = K(+)(out). With respect to regulation, heteromultimer composed of KCNJ3/GIRK1 and KCNJ5/GIRK4 is activated by phosphatidylinositol 4,5 biphosphate (PtdIns(4,5)P2). Its function is as follows. Inward rectifier potassium channels are characterized by a greater tendency to allow potassium to flow into the cell rather than out of it. Their voltage dependence is regulated by the concentration of extracellular potassium; as external potassium is raised, the voltage range of the channel opening shifts to more positive voltages. The inward rectification is mainly due to the blockage of outward current by internal magnesium. Can be blocked by external barium. This potassium channel is controlled by G proteins. Forms a functional channel in association with KCNJ3/GIRK1. The protein is G protein-activated inward rectifier potassium channel 4 (Kcnj5) of Mus musculus (Mouse).